Reading from the N-terminus, the 240-residue chain is Protein unc-119 homolog A (240 aa).

A compositionally biased stretch (gly residues) spans 1–12 (MKVKKGGGGAGT). Residues 1–61 (MKVKKGGGGA…GPLQRKQRIG (61 aa)) form a disordered region. Positions 13-23 (GAEPASGAPGP) are enriched in low complexity. Phosphoserine; by CK2 occurs at positions 37, 39, and 41. Tetradecanoate is bound at residue Tyr-131.

This sequence belongs to the PDE6D/unc-119 family. Interacts with CABP4; in the absence of calcium. May interact with GTP-bound ARL1. Interacts with ARL2 and ARL3 (GTP-bound forms); this promotes the release of myristoylated cargo proteins. Found in a complex with ARL3, RP2 and UNC119; RP2 induces hydrolysis of GTP ARL3 in the complex, leading to the release of UNC119. Interacts with NPHP3 (when myristoylated). Interacts with CYS1 (when myristoylated). Interacts with MACIR; interaction only takes place when UNC119 is not liganded with myristoylated proteins. Interacts with LCK; this interaction plays a crucial role in activation of LCK. Interacts with FYN. Interacts with RAB11A; in a cell cycle-dependent manner. Interacts with LYN (via SH2 and SH3 domains); leading to LYN activation. Interacts with DNM1; leading to a decrease of DNM1 GTPase activity. Found in a complex with ABL1, ABL2, CRK and UNC119; leading to the inhibition of CRK phosphorylation by ABL kinases. Interacts with CD44. Interacts with KLHL18 (via kelch repeats). Interacts with PPP3CA, PPP3CB and PPP3CC. Interacts with USP48; this interaction promotes UNC119 stability. Post-translationally, phosphorylation suppresses its interaction with KLHL18 and down-regulates its KLHL18-mediated degradation. Phosphorylated more under light conditions than dark conditions. Dephosphorylated by calcineurin.

It localises to the cytoplasm. It is found in the cytoskeleton. Its subcellular location is the microtubule organizing center. The protein resides in the centrosome. The protein localises to the spindle. It localises to the spindle pole. Involved in synaptic functions in photoreceptor cells, the signal transduction in immune cells as a Src family kinase activator, endosome recycling, the uptake of bacteria and endocytosis, protein trafficking in sensory neurons and as lipid-binding chaperone with specificity for a diverse subset of myristoylated proteins. Specifically binds the myristoyl moiety of a subset of N-terminally myristoylated proteins and is required for their localization. Binds myristoylated GNAT1 and is required for G-protein localization and trafficking in sensory neurons. Probably plays a role in trafficking proteins in photoreceptor cells. Plays important roles in mediating Src family kinase signals for the completion of cytokinesis via RAB11A. This is Protein unc-119 homolog A (UNC119) from Canis lupus familiaris (Dog).